The sequence spans 191 residues: Ribosome maturation factor RimM (191 aa).

The PRC barrel domain occupies 114–191 (EDEYYWVDLI…RIVVDWQPDY (78 aa)).

This sequence belongs to the RimM family. As to quaternary structure, binds ribosomal protein uS19.

Its subcellular location is the cytoplasm. In terms of biological role, an accessory protein needed during the final step in the assembly of 30S ribosomal subunit, possibly for assembly of the head region. Essential for efficient processing of 16S rRNA. May be needed both before and after RbfA during the maturation of 16S rRNA. It has affinity for free ribosomal 30S subunits but not for 70S ribosomes. In Paracidovorax citrulli (strain AAC00-1) (Acidovorax citrulli), this protein is Ribosome maturation factor RimM.